The following is a 217-amino-acid chain: MSAEPRINDRIRVPEVRLVGPSGEQVGIVPLAKALELAQEYDLDLVEVAANARPPVCKLMDYGKFKYESAMKAREARKNQAHTVIKEMKLRPKIDPHDYDTKKGHVVRFLKQGDKVKITIMFRGREQSRPELGYRLLQRLAEDVADLGFVESNPKQDGRNMIMVLGPHKKKTEAMAEARQAQEARKADAKANPGKSQNAAETDDAEAEAPAEAPAEA.

The segment at 170–217 is disordered; sequence KKTEAMAEARQAQEARKADAKANPGKSQNAAETDDAEAEAPAEAPAEA. Basic and acidic residues predominate over residues 172 to 189; it reads TEAMAEARQAQEARKADA.

It belongs to the IF-3 family. Monomer.

It is found in the cytoplasm. Its function is as follows. IF-3 binds to the 30S ribosomal subunit and shifts the equilibrium between 70S ribosomes and their 50S and 30S subunits in favor of the free subunits, thus enhancing the availability of 30S subunits on which protein synthesis initiation begins. The sequence is that of Translation initiation factor IF-3 from Streptomyces coelicolor (strain ATCC BAA-471 / A3(2) / M145).